The sequence spans 355 residues: DNA-directed RNA polymerase subunit alpha (355 aa).

The alpha N-terminal domain (alpha-NTD) stretch occupies residues 1 to 248 (MYYNNDVSLC…EQLQPFISSD (248 aa)). Residues 267–355 (YDPVLLRKVD…ELAKQHTDED (89 aa)) form an alpha C-terminal domain (alpha-CTD) region.

Belongs to the RNA polymerase alpha chain family. In terms of assembly, homodimer. The RNAP catalytic core consists of 2 alpha, 1 beta, 1 beta' and 1 omega subunit. When a sigma factor is associated with the core the holoenzyme is formed, which can initiate transcription.

The catalysed reaction is RNA(n) + a ribonucleoside 5'-triphosphate = RNA(n+1) + diphosphate. In terms of biological role, DNA-dependent RNA polymerase catalyzes the transcription of DNA into RNA using the four ribonucleoside triphosphates as substrates. In Wolbachia pipientis wMel, this protein is DNA-directed RNA polymerase subunit alpha.